A 241-amino-acid polypeptide reads, in one-letter code: HTH-type quorum-sensing regulator RhlR (241 aa).

Residues leucine 174–glycine 239 enclose the HTH luxR-type domain. Residues serine 198 to lysine 217 constitute a DNA-binding region (H-T-H motif).

Belongs to the autoinducer-regulated transcriptional regulatory protein family. Homodimer in the absence of any acyl-L-homoserine lactone. The presence of the autoinducer C4-HSL has no significant effect on dimerization whereas N-(3-oxododecanoyl)-L-homoserine lactone (3O-C12-HSL), the LasR inducer, is able to dissociate the RhlR homodimers into monomers.

The protein resides in the cytoplasm. Its activity is regulated as follows. Activated by interaction with the autoinducer signal molecule N-butanoyl-L-homoserine lactone (C4-HSL or BHL), the product of the RhlI synthase. Is also activated by binding to rosmarinic acid (RA), a homoserine lactone mimic produced by plants, which induces a broad quorum sensing response, including the induction of all major quorum sensing controlled virulence factors. Rosmarinic acid secretion may be a plant defense mechanism to stimulate a premature quorum sensing response. Functionally, quorum-sensing regulator that controls the expression of multiple virulence factors in response to extracellular signaling molecules called autoinducers. Involved, among others, in the transcriptional regulation of genes that are responsible for rhamnolipid surfactant biosynthesis. Acts by binding to a specific sequence in the rhlAB regulatory region, both in the presence and in the absence of its autoinducer. In the former case it activates transcription of the promoter, whereas in the latter it acts as a transcriptional repressor. Also regulates the expression of the rmlBDAC operon, encoding dTDP-L-rhamnose biosynthetic enzymes, by binding to the rml box in the promoter region. In addition, is involved in the regulation of the production of elastase (lasB) and pyocyanine. This chain is HTH-type quorum-sensing regulator RhlR, found in Pseudomonas aeruginosa (strain ATCC 15692 / DSM 22644 / CIP 104116 / JCM 14847 / LMG 12228 / 1C / PRS 101 / PAO1).